Consider the following 142-residue polypeptide: ATP synthase epsilon chain (142 aa).

This sequence belongs to the ATPase epsilon chain family. In terms of assembly, F-type ATPases have 2 components, CF(1) - the catalytic core - and CF(0) - the membrane proton channel. CF(1) has five subunits: alpha(3), beta(3), gamma(1), delta(1), epsilon(1). CF(0) has three main subunits: a, b and c.

It is found in the cell inner membrane. In terms of biological role, produces ATP from ADP in the presence of a proton gradient across the membrane. This chain is ATP synthase epsilon chain, found in Shewanella oneidensis (strain ATCC 700550 / JCM 31522 / CIP 106686 / LMG 19005 / NCIMB 14063 / MR-1).